The following is a 130-amino-acid chain: D-ribose pyranase (130 aa).

Histidine 20 functions as the Proton donor in the catalytic mechanism. Residues aspartate 28, histidine 97, and 119–121 (YSN) contribute to the substrate site.

This sequence belongs to the RbsD / FucU family. RbsD subfamily. As to quaternary structure, homodecamer.

The protein resides in the cytoplasm. The catalysed reaction is beta-D-ribopyranose = beta-D-ribofuranose. It participates in carbohydrate metabolism; D-ribose degradation; D-ribose 5-phosphate from beta-D-ribopyranose: step 1/2. Catalyzes the interconversion of beta-pyran and beta-furan forms of D-ribose. The polypeptide is D-ribose pyranase (Lacticaseibacillus casei (strain BL23) (Lactobacillus casei)).